The sequence spans 181 residues: Large ribosomal subunit protein uL5 (181 aa).

The protein belongs to the universal ribosomal protein uL5 family. Part of the 50S ribosomal subunit; part of the 5S rRNA/L5/L18/L25 subcomplex. Contacts the 5S rRNA and the P site tRNA. Forms a bridge to the 30S subunit in the 70S ribosome.

Functionally, this is one of the proteins that bind and probably mediate the attachment of the 5S RNA into the large ribosomal subunit, where it forms part of the central protuberance. In the 70S ribosome it contacts protein S13 of the 30S subunit (bridge B1b), connecting the 2 subunits; this bridge is implicated in subunit movement. Contacts the P site tRNA; the 5S rRNA and some of its associated proteins might help stabilize positioning of ribosome-bound tRNAs. The sequence is that of Large ribosomal subunit protein uL5 from Helicobacter acinonychis (strain Sheeba).